The following is a 130-amino-acid chain: Small ribosomal subunit protein uS8 (130 aa).

The protein belongs to the universal ribosomal protein uS8 family. As to quaternary structure, part of the 30S ribosomal subunit. Contacts proteins S5 and S12.

Its function is as follows. One of the primary rRNA binding proteins, it binds directly to 16S rRNA central domain where it helps coordinate assembly of the platform of the 30S subunit. The protein is Small ribosomal subunit protein uS8 of Marinomonas sp. (strain MWYL1).